The sequence spans 34 residues: Brevinin-2Rf (34 aa).

A disulfide bridge connects residues C28 and C34.

In terms of tissue distribution, expressed by the skin glands.

Its subcellular location is the secreted. In terms of biological role, antimicrobial peptide. The protein is Brevinin-2Rf of Pelophylax ridibundus (Marsh frog).